The primary structure comprises 603 residues: Extracellular basic protease (603 aa).

The first 21 residues, 1–21 (MNLSNISAVKVLTLVVSAAIA), serve as a signal peptide directing secretion. Residues 22–132 (GQVCAAESIV…VEVDRLAYPK (111 aa)) constitute a propeptide that is removed on maturation. The Peptidase S8 domain maps to 143 to 468 (QWHYFGNYGV…SGIVDANAAV (326 aa)). Asp173 serves as the catalytic Charge relay system. The segment at 197-221 (PNARDGDQRDNNPADEGDWFDNWDC) is disordered. 2 disulfides stabilise this stretch: Cys221/Cys273 and Cys315/Cys352. Residue His237 is the Charge relay system of the active site. Ser409 serves as the catalytic Charge relay system. The propeptide occupies 477-603 (RAQPRPPVNQ…GSIDSWSLTF (127 aa)). The 126-residue stretch at 478-603 (AQPRPPVNQP…GSIDSWSLTF (126 aa)) folds into the P/Homo B domain.

The protein belongs to the peptidase S8 family.

Its subcellular location is the secreted. The protein is Extracellular basic protease (bprV) of Dichelobacter nodosus (Bacteroides nodosus).